A 147-amino-acid chain; its full sequence is Large ribosomal subunit protein uL13 (147 aa).

The protein belongs to the universal ribosomal protein uL13 family. Part of the 50S ribosomal subunit.

Its function is as follows. This protein is one of the early assembly proteins of the 50S ribosomal subunit, although it is not seen to bind rRNA by itself. It is important during the early stages of 50S assembly. The protein is Large ribosomal subunit protein uL13 of Polaromonas naphthalenivorans (strain CJ2).